A 168-amino-acid polypeptide reads, in one-letter code: Lipoprotein signal peptidase (168 aa).

Transmembrane regions (helical) follow at residues 15 to 35, 47 to 67, 75 to 95, and 107 to 127; these read WLWLAILVFIADIGIKLVVMD, VLPFFNLLYVHNYGAAFSFLS, WLFTGIAFVVTGLLTYWMSKL, and ALIIGGAVGNVFDRVVHGFVV. Catalysis depends on residues Asp128 and Asp146. Residues 141–161 traverse the membrane as a helical segment; it reads AFNLADTTICIGAAMIILDGF.

This sequence belongs to the peptidase A8 family.

It is found in the cell inner membrane. It carries out the reaction Release of signal peptides from bacterial membrane prolipoproteins. Hydrolyzes -Xaa-Yaa-Zaa-|-(S,diacylglyceryl)Cys-, in which Xaa is hydrophobic (preferably Leu), and Yaa (Ala or Ser) and Zaa (Gly or Ala) have small, neutral side chains.. Its pathway is protein modification; lipoprotein biosynthesis (signal peptide cleavage). Functionally, this protein specifically catalyzes the removal of signal peptides from prolipoproteins. The sequence is that of Lipoprotein signal peptidase from Vibrio campbellii (strain ATCC BAA-1116).